The primary structure comprises 487 residues: MIPVVALVGRPNVGKSTLFNRLTRTRDALVADFPGLTRDRKYGRAFLSGYEFIVVDTGGIDGTEEGIETKMAEQSLAAIEEADVVLFMTDARAGLTAADLSIAQHLRSRQKTTFVVANKIDGIDADSACAEFWSLGLGEVYQMAAAQGRGVTNMIEYALTPYAEAMGIERQGEEEEVDERQYTEEEAEAEQKRLQDLPIKLAIIGKPNVGKSTLTNRILGEERVVVYDEPGTTRDSIYIPMERDGREYVIIDTAGVRRRSKVHEVIEKFSVIKTLKAVEDANVVLLIIDAREGVAEQDLGLLGFALNAGRALVIAVNKWDGIDQGIKDRVKSELDRRLGFIDFARIHFISALHGTGVGHLFESIEEAYDSATRRVSTSMLTRIMQMSQDDHQPPLVNGRRVKLKYAHAGGYNPPIVVIHGNQVSKLPDSYKRYMMNYFRRSLKVVGTPIQLRFQEGDNPFENKVEKLTMSQERRRKRALSHIKDRKK.

2 consecutive EngA-type G domains span residues 3-166 and 199-372; these read PVVA…AEAM and IKLA…DSAT. Residues 9 to 16, 56 to 60, 118 to 121, 205 to 212, 252 to 256, and 317 to 320 each bind GTP; these read GRPNVGKS, DTGGI, NKID, GKPNVGKS, DTAGV, and NKWD. The 85-residue stretch at 373–457 folds into the KH-like domain; sequence RRVSTSMLTR…PIQLRFQEGD (85 aa).

The protein belongs to the TRAFAC class TrmE-Era-EngA-EngB-Septin-like GTPase superfamily. EngA (Der) GTPase family. In terms of assembly, associates with the 50S ribosomal subunit.

Functionally, GTPase that plays an essential role in the late steps of ribosome biogenesis. The polypeptide is GTPase Der (Shewanella oneidensis (strain ATCC 700550 / JCM 31522 / CIP 106686 / LMG 19005 / NCIMB 14063 / MR-1)).